The chain runs to 499 residues: uncharacterized protein (499 aa).

The next 11 helical transmembrane spans lie at 5–25 (FLLV…YNAV), 79–99 (LGLR…TYLL), 110–130 (ALLS…ARYA), 132–152 (PEVP…EYFT), 170–190 (VLTK…FYLL), 203–223 (YAGT…QYLV), 252–272 (ALDI…ALFW), 286–306 (VWFS…PVYI), 332–352 (LSLI…SLYF), 354–374 (FSAT…LKKY), and 377–397 (LPAF…LPYV).

The protein belongs to the glycosyltransferase 39 family.

It localises to the cell membrane. This is an uncharacterized protein from Aquifex aeolicus (strain VF5).